Consider the following 143-residue polypeptide: UPF0201 protein Msed_1787 (143 aa).

It belongs to the UPF0201 family.

The protein is UPF0201 protein Msed_1787 of Metallosphaera sedula (strain ATCC 51363 / DSM 5348 / JCM 9185 / NBRC 15509 / TH2).